The chain runs to 264 residues: Cercarial protease (264 aa).

Residues 1–19 form the signal peptide; sequence MSNRWRFVVVVTLFTYCLT. The propeptide occupies 20 to 27; it reads FERVSTWL. The Peptidase S1 domain maps to 28–264; sequence IRSGEPVQHP…RMLDFVRSNI (237 aa). A disulfide bond links C53 and C69. Catalysis depends on charge relay system residues H68 and D126. C192 and C202 form a disulfide bridge. The Charge relay system role is filled by S218.

The protein belongs to the peptidase S1 family. In terms of tissue distribution, acetabular (penetration) glands.

Activated by an autocatalytic mechanism. Its function is as follows. This protease cleaves elastin and thus facilitates penetration of schistosome parasite larvae through elastin-rich tissue of the host. The protein is Cercarial protease of Schistosoma mansoni (Blood fluke).